We begin with the raw amino-acid sequence, 104 residues long: UPF0212 protein PH1312 (104 aa).

It belongs to the UPF0212 family.

The chain is UPF0212 protein PH1312 from Pyrococcus horikoshii (strain ATCC 700860 / DSM 12428 / JCM 9974 / NBRC 100139 / OT-3).